The following is a 317-amino-acid chain: MLGTSLSPHHENFWAVIKSYYQLTKPRIIPLLLITTAASMWIASHGHIDPVKLLITLLGGTLAAASAQTLNCIYDQDIDFSMQRTRKRPIPSGRVQPRHALIFALILGSLSFSLLMVFVNLLSACLALSGIVFYMLVYTHWLKRHHVQNIVIGGAAGSIPPLVGWAAVTGQLDWSAWILFALIFLWTPPHFWALALMIKEDYAEVEVPMLPVVKGEKITVDQIWIYTLIVVPFSLLLVFPFQASGLFYAIAALVLGAIFIQKAWELKQNPFDQSLAKSMFKYSILYMMLLCTAMVVDSLPAVHDVTALVTTTLASLT.

9 consecutive transmembrane segments (helical) span residues 28 to 48 (IIPL…HGHI), 53 to 73 (LLIT…LNCI), 101 to 121 (LIFA…FVNL), 122 to 142 (LSAC…THWL), 150 to 170 (IVIG…AVTG), 178 to 198 (ILFA…ALMI), 223 to 243 (IWIY…PFQA), 246 to 266 (LFYA…AWEL), and 282 to 302 (YSIL…LPAV).

Belongs to the UbiA prenyltransferase family. Protoheme IX farnesyltransferase subfamily.

The protein localises to the cell inner membrane. The catalysed reaction is heme b + (2E,6E)-farnesyl diphosphate + H2O = Fe(II)-heme o + diphosphate. The protein operates within porphyrin-containing compound metabolism; heme O biosynthesis; heme O from protoheme: step 1/1. In terms of biological role, converts heme B (protoheme IX) to heme O by substitution of the vinyl group on carbon 2 of heme B porphyrin ring with a hydroxyethyl farnesyl side group. The polypeptide is Protoheme IX farnesyltransferase (Picosynechococcus sp. (strain ATCC 27264 / PCC 7002 / PR-6) (Agmenellum quadruplicatum)).